The following is a 212-amino-acid chain: Peptide methionine sulfoxide reductase MsrA (212 aa).

The active site involves Cys52.

Belongs to the MsrA Met sulfoxide reductase family.

It carries out the reaction L-methionyl-[protein] + [thioredoxin]-disulfide + H2O = L-methionyl-(S)-S-oxide-[protein] + [thioredoxin]-dithiol. The catalysed reaction is [thioredoxin]-disulfide + L-methionine + H2O = L-methionine (S)-S-oxide + [thioredoxin]-dithiol. In terms of biological role, has an important function as a repair enzyme for proteins that have been inactivated by oxidation. Catalyzes the reversible oxidation-reduction of methionine sulfoxide in proteins to methionine. This Shigella boydii serotype 4 (strain Sb227) protein is Peptide methionine sulfoxide reductase MsrA.